We begin with the raw amino-acid sequence, 501 residues long: Lysine--tRNA ligase (501 aa).

Mg(2+) contacts are provided by Glu411 and Glu418.

This sequence belongs to the class-II aminoacyl-tRNA synthetase family. As to quaternary structure, homodimer. It depends on Mg(2+) as a cofactor.

It localises to the cytoplasm. The enzyme catalyses tRNA(Lys) + L-lysine + ATP = L-lysyl-tRNA(Lys) + AMP + diphosphate. The protein is Lysine--tRNA ligase of Pseudomonas aeruginosa (strain ATCC 15692 / DSM 22644 / CIP 104116 / JCM 14847 / LMG 12228 / 1C / PRS 101 / PAO1).